A 542-amino-acid chain; its full sequence is Chaperonin GroEL 2 (542 aa).

ATP is bound by residues 30-33 (TLGP), Lys51, 87-91 (DGTTT), Gly415, and Asp496.

The protein belongs to the chaperonin (HSP60) family. In terms of assembly, forms a cylinder of 14 subunits composed of two heptameric rings stacked back-to-back. Interacts with the co-chaperonin GroES.

Its subcellular location is the cytoplasm. The enzyme catalyses ATP + H2O + a folded polypeptide = ADP + phosphate + an unfolded polypeptide.. Functionally, together with its co-chaperonin GroES, plays an essential role in assisting protein folding. The GroEL-GroES system forms a nano-cage that allows encapsulation of the non-native substrate proteins and provides a physical environment optimized to promote and accelerate protein folding. This chain is Chaperonin GroEL 2, found in Rhizobium etli (strain ATCC 51251 / DSM 11541 / JCM 21823 / NBRC 15573 / CFN 42).